We begin with the raw amino-acid sequence, 370 residues long: Peptide chain release factor 2 (370 aa).

Gln252 carries the N5-methylglutamine modification.

This sequence belongs to the prokaryotic/mitochondrial release factor family. In terms of processing, methylated by PrmC. Methylation increases the termination efficiency of RF2.

It localises to the cytoplasm. Functionally, peptide chain release factor 2 directs the termination of translation in response to the peptide chain termination codons UGA and UAA. The chain is Peptide chain release factor 2 from Mycobacterium avium (strain 104).